The primary structure comprises 499 residues: UDP-N-acetylmuramoylalanine--D-glutamate ligase (499 aa).

An ATP-binding site is contributed by 120–126; the sequence is GTNGKTT.

It belongs to the MurCDEF family.

It is found in the cytoplasm. It carries out the reaction UDP-N-acetyl-alpha-D-muramoyl-L-alanine + D-glutamate + ATP = UDP-N-acetyl-alpha-D-muramoyl-L-alanyl-D-glutamate + ADP + phosphate + H(+). It participates in cell wall biogenesis; peptidoglycan biosynthesis. In terms of biological role, cell wall formation. Catalyzes the addition of glutamate to the nucleotide precursor UDP-N-acetylmuramoyl-L-alanine (UMA). This Nostoc punctiforme (strain ATCC 29133 / PCC 73102) protein is UDP-N-acetylmuramoylalanine--D-glutamate ligase.